The chain runs to 111 residues: Flagellar hook-basal body complex protein FliE (111 aa).

This sequence belongs to the FliE family.

The protein resides in the bacterial flagellum basal body. The polypeptide is Flagellar hook-basal body complex protein FliE (Sinorhizobium fredii (strain NBRC 101917 / NGR234)).